Reading from the N-terminus, the 285-residue chain is HTH-type transcriptional regulator MurR (285 aa).

The 77-residue stretch at 1 to 77 (MLYLTKIRNA…MALIGEYSAS (77 aa)) folds into the HTH rpiR-type domain. The segment at residues 37–56 (SRKMAKQLGISQSSIVKFAQ) is a DNA-binding region (H-T-H motif). One can recognise an SIS domain in the interval 128–268 (IIEVISKAPF…FVGLVQLNDV (141 aa)).

In terms of assembly, homotetramer.

Its pathway is amino-sugar metabolism; N-acetylmuramate degradation [regulation]. Functionally, represses the expression of the murPQ operon involved in the uptake and degradation of N-acetylmuramic acid (MurNAc). Binds to two adjacent inverted repeats within the operator region. MurNAc 6-phosphate, the substrate of MurQ, is the specific inducer that weakens binding of MurR to the operator. This Shigella sonnei (strain Ss046) protein is HTH-type transcriptional regulator MurR.